Here is a 444-residue protein sequence, read N- to C-terminus: 23S rRNA (uracil(1939)-C(5))-methyltransferase RlmD (444 aa).

The 63-residue stretch at 5 to 67 folds into the TRAM domain; it reads RNRLDRTPFQ…RHFDEAKTVE (63 aa). 4 residues coordinate [4Fe-4S] cluster: C80, C86, C89, and C168. S-adenosyl-L-methionine contacts are provided by Q276, F305, N310, E326, D353, and D374. C400 acts as the Nucleophile in catalysis.

Belongs to the class I-like SAM-binding methyltransferase superfamily. RNA M5U methyltransferase family. RlmD subfamily.

It catalyses the reaction uridine(1939) in 23S rRNA + S-adenosyl-L-methionine = 5-methyluridine(1939) in 23S rRNA + S-adenosyl-L-homocysteine + H(+). Functionally, catalyzes the formation of 5-methyl-uridine at position 1939 (m5U1939) in 23S rRNA. This Xanthomonas euvesicatoria pv. vesicatoria (strain 85-10) (Xanthomonas campestris pv. vesicatoria) protein is 23S rRNA (uracil(1939)-C(5))-methyltransferase RlmD.